Reading from the N-terminus, the 150-residue chain is UPF0756 membrane protein HAPS_1649 (150 aa).

5 consecutive transmembrane segments (helical) span residues 1–21 (MSLQ…LGIF), 27–46 (VTIS…SKYV), 52–72 (YGIK…LVSG), 82–102 (LINW…WLGG), and 123–143 (IIGV…AGIL).

It belongs to the UPF0756 family.

The protein resides in the cell membrane. This Glaesserella parasuis serovar 5 (strain SH0165) (Haemophilus parasuis) protein is UPF0756 membrane protein HAPS_1649.